The chain runs to 240 residues: Serine protease SplB (240 aa).

The signal sequence occupies residues 1–36 (MNKNVVIKSLATLTILTSVAGIGTTLVEEVQQTAKA). Active-site charge relay system residues include histidine 75, aspartate 113, and serine 193.

This sequence belongs to the peptidase S1B family.

The protein resides in the secreted. In terms of biological role, serine protease that cleaves specifically after the sequence Trp-Glu-Leu-Gln. The chain is Serine protease SplB (splB) from Staphylococcus aureus (strain bovine RF122 / ET3-1).